Consider the following 391-residue polypeptide: cAMP-dependent protein kinase regulatory subunit (391 aa).

The tract at residues 1 to 84 (MFKSPFGANA…PPNPESYPAQ (84 aa)) is disordered. The interval 1–131 (MFKSPFGANA…RLKTAIAGNF (131 aa)) is dimerization and phosphorylation. Residues 38 to 55 (TVTSPTSPNFGMNAQSMF) show a composition bias toward polar residues. S92 is modified (phosphoserine). 3',5'-cyclic AMP-binding positions include 132–261 (LFSH…FLRE), E210, R219, 264–381 (LLQT…DIKT), E331, and R340.

This sequence belongs to the cAMP-dependent kinase regulatory chain family. Tetramer, composed of 2 regulatory (R) and 2 catalytic (C) subunits. In the presence of cAMP it dissociates into 2 active monomeric C subunits and an R dimer.

The protein is cAMP-dependent protein kinase regulatory subunit (PKAR) of Colletotrichum orbiculare (strain 104-T / ATCC 96160 / CBS 514.97 / LARS 414 / MAFF 240422) (Cucumber anthracnose fungus).